The following is a 124-amino-acid chain: 14 kDa peptide of ubiquinol-cytochrome c2 oxidoreductase complex (124 aa).

The chain crosses the membrane as a helical span at residues Leu85–Phe102.

Its subcellular location is the cell inner membrane. In terms of biological role, component of the ubiquinol-cytochrome c reductase complex (complex III or cytochrome b-c1 complex), which is a respiratory chain that generates an electrochemical potential coupled to ATP synthesis. The protein is 14 kDa peptide of ubiquinol-cytochrome c2 oxidoreductase complex of Cereibacter sphaeroides (Rhodobacter sphaeroides).